The following is an 81-amino-acid chain: Neuronatin (81 aa).

Belongs to the neuronatin family.

Functionally, may participate in the maintenance of segment identity in the hindbrain and pituitary development, and maturation or maintenance of the overall structure of the nervous system. May function as a regulatory subunit of ion channels. The polypeptide is Neuronatin (NNAT) (Mesocricetus auratus (Golden hamster)).